The sequence spans 155 residues: Small ribosomal subunit protein uS7cz/uS7cy (155 aa).

Belongs to the universal ribosomal protein uS7 family. As to quaternary structure, part of the 30S ribosomal subunit.

It localises to the plastid. It is found in the chloroplast. In terms of biological role, one of the primary rRNA binding proteins, it binds directly to 16S rRNA where it nucleates assembly of the head domain of the 30S subunit. The polypeptide is Small ribosomal subunit protein uS7cz/uS7cy (rps7-A) (Calycanthus floridus var. glaucus (Eastern sweetshrub)).